A 471-amino-acid chain; its full sequence is ATP synthase subunit beta (471 aa).

ATP is bound at residue 159–166 (GGAGVGKT).

Belongs to the ATPase alpha/beta chains family. In terms of assembly, F-type ATPases have 2 components, CF(1) - the catalytic core - and CF(0) - the membrane proton channel. CF(1) has five subunits: alpha(3), beta(3), gamma(1), delta(1), epsilon(1). CF(0) has four main subunits: a(1), b(1), b'(1) and c(9-12).

Its subcellular location is the cell membrane. It catalyses the reaction ATP + H2O + 4 H(+)(in) = ADP + phosphate + 5 H(+)(out). In terms of biological role, produces ATP from ADP in the presence of a proton gradient across the membrane. The catalytic sites are hosted primarily by the beta subunits. The chain is ATP synthase subunit beta from Heliobacterium modesticaldum (strain ATCC 51547 / Ice1).